The following is a 345-amino-acid chain: MIFNYVFSNSFSFLYLMVNVQCRIKEIMYWNICLYWDVFSKLIIYNKVCQFGRIHIFHGKNRHQLLRTCHFTPSKRHSAMSFFEALGAGICAGLAVDLSLFPIDTLKTRLQAKGGFVKNGGFHGVYRGLGSILVGSAPGASLFFTTYENMKSRLSQSGLGLSDPQIHMCSASLGEIAACIVRVPTEVIKQRAQASGGTLSSRNILQTILKSNNVWRDFYAGYGITIAREIPFTLIQFPIWEHLKLKWRIKHSRNKNLAHEAAISGSIAGGIAAALTTPFDVVKTRIMTSQQRLSYVFTIKSIVAHEGFLALYKGIVPRVLWLSGGGAIFLGCYDVILNFMKAEGL.

Solcar repeat units follow at residues 80–153 (MSFF…MKSR), 162–246 (SDPQ…LKLK), and 256–339 (NLAH…ILNF). The next 6 helical transmembrane spans lie at 83–103 (FEAL…LFPI), 128–148 (GLGS…TTYE), 220–240 (AGYG…FPIW), 262–282 (AISG…FDVV), 296–316 (VFTI…KGIV), and 319–339 (VLWL…ILNF).

The protein belongs to the mitochondrial carrier (TC 2.A.29) family.

It localises to the mitochondrion inner membrane. This is an uncharacterized protein from Schizosaccharomyces pombe (strain 972 / ATCC 24843) (Fission yeast).